Consider the following 689-residue polypeptide: Protein CFAP20DC (689 aa).

Disordered stretches follow at residues 143–179 (GPPPLSGRRSNMRISSETVRSVGSKNNRSCQPSTVEK), 217–236 (LPIMHPHPPQEPSADKNNNR), 241–262 (LKSTSRERTETPSGNSSGNNTN), 333–424 (SKES…PSEL), and 583–660 (SIST…LSVE). The segment covering 150 to 176 (RRSNMRISSETVRSVGSKNNRSCQPST) has biased composition (polar residues). The span at 343 to 359 (EESQSVPKDIFTFSSRP) shows a compositional bias: polar residues. The segment covering 394 to 405 (SEDDFYGGDSSE) has biased composition (acidic residues). Polar residues predominate over residues 411–421 (IQGSRGPTTGP). The segment covering 583 to 593 (SISTSSDDTTT) has biased composition (low complexity).

The chain is Protein CFAP20DC (CFAP20DC) from Macaca fascicularis (Crab-eating macaque).